Here is a 276-residue protein sequence, read N- to C-terminus: Energy-coupling factor transporter ATP-binding protein EcfA1 (276 aa).

The region spanning 2 to 237 is the ABC transporter domain; that stretch reads IEIKNLKFKY…GSELVDLGLD (236 aa). Position 37–44 (37–44) interacts with ATP; it reads GHNGSGKS.

The protein belongs to the ABC transporter superfamily. Energy-coupling factor EcfA family. As to quaternary structure, forms a stable energy-coupling factor (ECF) transporter complex composed of 2 membrane-embedded substrate-binding proteins (S component), 2 ATP-binding proteins (A component) and 2 transmembrane proteins (T component).

It localises to the cell membrane. Its function is as follows. ATP-binding (A) component of a common energy-coupling factor (ECF) ABC-transporter complex. Unlike classic ABC transporters this ECF transporter provides the energy necessary to transport a number of different substrates. This is Energy-coupling factor transporter ATP-binding protein EcfA1 from Streptococcus thermophilus (strain CNRZ 1066).